We begin with the raw amino-acid sequence, 165 residues long: Nucleotide-binding protein CFF8240_1664 (165 aa).

This sequence belongs to the YajQ family.

Functionally, nucleotide-binding protein. The protein is Nucleotide-binding protein CFF8240_1664 of Campylobacter fetus subsp. fetus (strain 82-40).